A 485-amino-acid chain; its full sequence is KTTNTFASVNDDEKPREECGVVGIYGDPEASRLCSLALHALQHRGQEGAGIVAVHDNLFHQVNGVGLVSDVFNEAKLSELPGSCAIGHVRYSTAGHSKLVNVQPFVAGYRFGSVAVAHNGNFVNYRSLRAKLEDNGSIFNTTSDTEVVLHLIATSKHRPFLLRVVDACENLKGAYSLVFLTEDKLVAVRDFGFRPLVMGRRKNGAVVFASETCALDLIDATYEREVNPGEVVVVDHTGIQSLCLVTHQEPKQCIFEHIYFALPNSVVFGRSVYESRRKFGEILATESPVECDVVIAVPDSGVVAALGYAAKAGVPFQQGLIRSHHVGRTFIEPSQKIRDFGVKLKLFPVRGVLEGKRVVVVDDSIVRGTTSSKIVRLIKEAGAKEVHMRIACPPIVASCYYGVDTPSKEELISNRMDVEEIRKFIGSDSLAFLPLDTLKSLLEDDAPNYCYACFSGKYPVQPENLNPTASMSLTGTMFQWQFETY.

A chloroplast-targeting transit peptide spans 1-18; the sequence is KTTNTFASVNDDEKPREE. Cys-19 acts as the Nucleophile in catalysis. The region spanning 19–237 is the Glutamine amidotransferase type-2 domain; it reads CGVVGIYGDP…PGEVVVVDHT (219 aa). Cys-253 contributes to the [4Fe-4S] cluster binding site. Positions 300, 362, and 363 each coordinate Mg(2+). [4Fe-4S] cluster contacts are provided by Cys-399, Cys-450, and Cys-453.

It in the C-terminal section; belongs to the purine/pyrimidine phosphoribosyltransferase family. It depends on Mg(2+) as a cofactor. [4Fe-4S] cluster serves as cofactor.

The protein resides in the plastid. Its subcellular location is the chloroplast. It catalyses the reaction 5-phospho-beta-D-ribosylamine + L-glutamate + diphosphate = 5-phospho-alpha-D-ribose 1-diphosphate + L-glutamine + H2O. The protein operates within purine metabolism; IMP biosynthesis via de novo pathway; N(1)-(5-phospho-D-ribosyl)glycinamide from 5-phospho-alpha-D-ribose 1-diphosphate: step 1/2. The protein is Amidophosphoribosyltransferase, chloroplastic (PUR1) of Vigna aconitifolia (Moth bean).